Here is a 76-residue protein sequence, read N- to C-terminus: Bacteriocin uberolysin (76 aa).

Residues 1–6 (MDILLE) constitute a propeptide that is removed on maturation. A cross-link (cyclopeptide (Leu-Trp)) is located at residues 7–76 (LAGYTGIASG…RNLKAQAVIW (70 aa)).

Belongs to the bacteriocin class V family.

It localises to the secreted. Its function is as follows. Cyclopeptide antibiotic with bacteriolytic activity against most streptococci (except S.rattus and S.mutans), Listeria spp., enterococci and staphylococci. The chain is Bacteriocin uberolysin (ublA) from Streptococcus uberis.